A 355-amino-acid chain; its full sequence is Ubiquinone biosynthesis protein COQ4 homolog, mitochondrial (355 aa).

Residues His-134, Asp-135, His-138, and Glu-150 each contribute to the Zn(2+) site.

The protein belongs to the COQ4 family. In terms of assembly, component of a multi-subunit COQ enzyme complex. Zn(2+) serves as cofactor.

Its subcellular location is the mitochondrion inner membrane. It catalyses the reaction a 4-hydroxy-3-methoxy-5-(all-trans-polyprenyl)benzoate + H(+) = a 2-methoxy-6-(all-trans-polyprenyl)phenol + CO2. It participates in cofactor biosynthesis; ubiquinone biosynthesis. Its function is as follows. Lyase that catalyzes the C1-decarboxylation of 4-hydroxy-3-methoxy-5-(all-trans-polyprenyl)benzoic acid into 2-methoxy-6-(all-trans-polyprenyl)phenol during ubiquinone biosynthesis. This is Ubiquinone biosynthesis protein COQ4 homolog, mitochondrial from Plasmodium chabaudi chabaudi.